A 545-amino-acid chain; its full sequence is Glucose-6-phosphate isomerase (545 aa).

Glu351 functions as the Proton donor in the catalytic mechanism. Residues His382 and Lys510 contribute to the active site.

Belongs to the GPI family.

It is found in the cytoplasm. It catalyses the reaction alpha-D-glucose 6-phosphate = beta-D-fructose 6-phosphate. The protein operates within carbohydrate biosynthesis; gluconeogenesis. Its pathway is carbohydrate degradation; glycolysis; D-glyceraldehyde 3-phosphate and glycerone phosphate from D-glucose: step 2/4. Its function is as follows. Catalyzes the reversible isomerization of glucose-6-phosphate to fructose-6-phosphate. In Shewanella pealeana (strain ATCC 700345 / ANG-SQ1), this protein is Glucose-6-phosphate isomerase.